Reading from the N-terminus, the 223-residue chain is Phosphoribosylformylglycinamidine synthase subunit PurQ (223 aa).

One can recognise a Glutamine amidotransferase type-1 domain in the interval 3–223 (FAVLVFPGSN…MVKSWREQHV (221 aa)). Cys-85 acts as the Nucleophile in catalysis. Active-site residues include His-193 and Glu-195.

As to quaternary structure, part of the FGAM synthase complex composed of 1 PurL, 1 PurQ and 2 PurS subunits.

It localises to the cytoplasm. It carries out the reaction N(2)-formyl-N(1)-(5-phospho-beta-D-ribosyl)glycinamide + L-glutamine + ATP + H2O = 2-formamido-N(1)-(5-O-phospho-beta-D-ribosyl)acetamidine + L-glutamate + ADP + phosphate + H(+). The enzyme catalyses L-glutamine + H2O = L-glutamate + NH4(+). The protein operates within purine metabolism; IMP biosynthesis via de novo pathway; 5-amino-1-(5-phospho-D-ribosyl)imidazole from N(2)-formyl-N(1)-(5-phospho-D-ribosyl)glycinamide: step 1/2. Functionally, part of the phosphoribosylformylglycinamidine synthase complex involved in the purines biosynthetic pathway. Catalyzes the ATP-dependent conversion of formylglycinamide ribonucleotide (FGAR) and glutamine to yield formylglycinamidine ribonucleotide (FGAM) and glutamate. The FGAM synthase complex is composed of three subunits. PurQ produces an ammonia molecule by converting glutamine to glutamate. PurL transfers the ammonia molecule to FGAR to form FGAM in an ATP-dependent manner. PurS interacts with PurQ and PurL and is thought to assist in the transfer of the ammonia molecule from PurQ to PurL. The sequence is that of Phosphoribosylformylglycinamidine synthase subunit PurQ from Staphylococcus aureus (strain Mu50 / ATCC 700699).